A 558-amino-acid polypeptide reads, in one-letter code: Xylulose kinase 2 (558 aa).

Residues Asp-16, 20-23 (QSMK), Ser-111, and Asp-283 each bind substrate. ATP-binding positions include Thr-305 and 456 to 460 (GASAN).

It belongs to the FGGY kinase family. It depends on a divalent metal cation as a cofactor.

It is found in the cytoplasm. It catalyses the reaction D-xylulose + ATP = D-xylulose 5-phosphate + ADP + H(+). Its pathway is isoprenoid biosynthesis; carotenoid biosynthesis. Its activity is regulated as follows. Repressed by oxo-clomazone (keto-clomazone), a bleaching herbicide. Its function is as follows. Mediates 1-deoxy-D-xylulose (DX) phosphorylation in the cytoplasm prior to the translocation of 1-deoxy-D-xylulose 5-phosphate into plastids. Can also phosphorylate D-xylulose (Xyl). Uses preferentially ATP as cosubstrate. This is Xylulose kinase 2 from Arabidopsis thaliana (Mouse-ear cress).